A 242-amino-acid polypeptide reads, in one-letter code: Probable septum site-determining protein MinC (242 aa).

It belongs to the MinC family. In terms of assembly, interacts with MinD and FtsZ.

Its function is as follows. Cell division inhibitor that blocks the formation of polar Z ring septums. Rapidly oscillates between the poles of the cell to destabilize FtsZ filaments that have formed before they mature into polar Z rings. Prevents FtsZ polymerization. This is Probable septum site-determining protein MinC from Agrobacterium fabrum (strain C58 / ATCC 33970) (Agrobacterium tumefaciens (strain C58)).